A 182-amino-acid polypeptide reads, in one-letter code: Probable pyruvoyl-dependent arginine decarboxylase (182 aa).

Serine 43 carries the post-translational modification Pyruvic acid (Ser).

It belongs to the PdaD family. It depends on pyruvate as a cofactor.

It catalyses the reaction L-arginine + H(+) = agmatine + CO2. In Chloroherpeton thalassium (strain ATCC 35110 / GB-78), this protein is Probable pyruvoyl-dependent arginine decarboxylase.